Consider the following 675-residue polypeptide: L-type lectin-domain containing receptor kinase IX.2 (675 aa).

The signal sequence occupies residues 1–35 (MLYFIFCQNLSSSSSMSNSILFLSLFLFLPFVVDS). N-linked (GlcNAc...) asparagine glycans are attached at residues Asn9, Asn39, Asn110, Asn146, Asn179, Asn186, Asn191, and Asn212. The segment at 36–269 (LYFNFTSFRQ…EEHRLLSWEL (234 aa)) is legume-lectin like. Over 36 to 281 (LYFNFTSFRQ…SLDSDKADSR (246 aa)) the chain is Extracellular. Residues 282-302 (IGLVIGISASGFVFLTFMVIT) form a helical membrane-spanning segment. At 303–675 (TVVVWSRKQR…VTFSGIEYGR (373 aa)) the chain is on the cytoplasmic side. Residues 350–631 (FSSHRKLGEG…KQGIQVMNFE (282 aa)) enclose the Protein kinase domain. ATP contacts are provided by residues 356–364 (LGEGGFGAV) and Lys379. Residue Asp475 is the Proton acceptor of the active site.

The protein in the C-terminal section; belongs to the protein kinase superfamily. Ser/Thr protein kinase family. This sequence in the N-terminal section; belongs to the leguminous lectin family. Interacts with ABCG40.

The protein localises to the cell membrane. The catalysed reaction is L-seryl-[protein] + ATP = O-phospho-L-seryl-[protein] + ADP + H(+). It catalyses the reaction L-threonyl-[protein] + ATP = O-phospho-L-threonyl-[protein] + ADP + H(+). In terms of biological role, promotes hydrogen peroxide H(2)O(2) production and cell death. Functionally, involved in resistance response to the pathogenic oomycetes Phytophthora infestans and Phytophthora capsici. This is L-type lectin-domain containing receptor kinase IX.2 from Arabidopsis thaliana (Mouse-ear cress).